Reading from the N-terminus, the 497-residue chain is Probable cytosol aminopeptidase (497 aa).

The Mn(2+) site is built by K265 and D270. Residue K277 is part of the active site. Mn(2+)-binding residues include D288, D347, and E349. The active site involves R351.

This sequence belongs to the peptidase M17 family. Mn(2+) is required as a cofactor.

It is found in the cytoplasm. The enzyme catalyses Release of an N-terminal amino acid, Xaa-|-Yaa-, in which Xaa is preferably Leu, but may be other amino acids including Pro although not Arg or Lys, and Yaa may be Pro. Amino acid amides and methyl esters are also readily hydrolyzed, but rates on arylamides are exceedingly low.. It catalyses the reaction Release of an N-terminal amino acid, preferentially leucine, but not glutamic or aspartic acids.. Presumably involved in the processing and regular turnover of intracellular proteins. Catalyzes the removal of unsubstituted N-terminal amino acids from various peptides. This Geobacillus sp. (strain WCH70) protein is Probable cytosol aminopeptidase.